A 310-amino-acid chain; its full sequence is UDP-N-acetylenolpyruvoylglucosamine reductase (310 aa).

The 171-residue stretch at Arg-30 to Gly-200 folds into the FAD-binding PCMH-type domain. Arg-179 is a catalytic residue. Catalysis depends on Ser-230, which acts as the Proton donor. The active site involves Glu-300.

This sequence belongs to the MurB family. It depends on FAD as a cofactor.

The protein resides in the cytoplasm. It carries out the reaction UDP-N-acetyl-alpha-D-muramate + NADP(+) = UDP-N-acetyl-3-O-(1-carboxyvinyl)-alpha-D-glucosamine + NADPH + H(+). It functions in the pathway cell wall biogenesis; peptidoglycan biosynthesis. Functionally, cell wall formation. The chain is UDP-N-acetylenolpyruvoylglucosamine reductase from Synechococcus sp. (strain WH7803).